Reading from the N-terminus, the 235-residue chain is Probable ribosomal RNA small subunit methyltransferase A (235 aa).

The S-adenosyl-L-methionine site is built by histidine 9, leucine 11, glycine 34, glutamate 55, aspartate 78, and asparagine 93.

This sequence belongs to the class I-like SAM-binding methyltransferase superfamily. rRNA adenine N(6)-methyltransferase family. RsmA subfamily.

The protein localises to the cytoplasm. Specifically dimethylates two adjacent adenosines in the loop of a conserved hairpin near the 3'-end of 16S rRNA in the 30S particle. May play a critical role in biogenesis of 30S subunits. The chain is Probable ribosomal RNA small subunit methyltransferase A from Pyrobaculum islandicum (strain DSM 4184 / JCM 9189 / GEO3).